Consider the following 242-residue polypeptide: Uridylate kinase (242 aa).

15–18 provides a ligand contact to ATP; it reads KLSG. Residues 23–28 form an involved in allosteric activation by GTP region; sequence GAEGFG. G57 provides a ligand contact to UMP. Positions 58 and 62 each coordinate ATP. UMP contacts are provided by residues D77 and 138 to 145; that span reads TGNPFFTT. The ATP site is built by T165, Y171, and D174.

Belongs to the UMP kinase family. Homohexamer.

The protein localises to the cytoplasm. It carries out the reaction UMP + ATP = UDP + ADP. The protein operates within pyrimidine metabolism; CTP biosynthesis via de novo pathway; UDP from UMP (UMPK route): step 1/1. Its activity is regulated as follows. Allosterically activated by GTP. Inhibited by UTP. Catalyzes the reversible phosphorylation of UMP to UDP. The protein is Uridylate kinase of Photorhabdus laumondii subsp. laumondii (strain DSM 15139 / CIP 105565 / TT01) (Photorhabdus luminescens subsp. laumondii).